A 1349-amino-acid chain; its full sequence is Nitric oxide synthase (1349 aa).

Positions Ala23 to Arg195 are disordered. Low complexity-rich tracts occupy residues Gln24 to Gln51 and Leu64 to Asn73. The span at Ser142–Ala159 shows a compositional bias: gly residues. Polar residues predominate over residues Gly165–Lys189. A (6R)-L-erythro-5,6,7,8-tetrahydrobiopterin-binding site is contributed by Ser250. Heme b is bound at residue Cys328. L-arginine-binding residues include Gln391, Trp500, Tyr501, Glu505, and Asn510. (6R)-L-erythro-5,6,7,8-tetrahydrobiopterin is bound by residues Trp591 and Phe604. A heme b-binding site is contributed by Tyr619. The calmodulin-binding stretch occupies residues Pro641 to Phe661. A Flavodoxin-like domain is found at Ala671 to Phe868. Val814–Leu845 contributes to the FMN binding site. The 240-residue stretch at Ala928–Pro1167 folds into the FAD-binding FR-type domain. FAD contacts are provided by residues Tyr957 to Ala968 and Leu1100 to Ser1110. Residues Ile1175–Phe1193 and Gly1273–Val1287 each bind NADP(+).

Belongs to the NOS family. It depends on heme b as a cofactor. Requires FAD as cofactor. FMN is required as a cofactor.

The catalysed reaction is 2 L-arginine + 3 NADPH + 4 O2 + H(+) = 2 L-citrulline + 2 nitric oxide + 3 NADP(+) + 4 H2O. With respect to regulation, stimulated by calcium/calmodulin. Functionally, catalyzes the conversion of L-arginine to L-citrulline producing nitric oxide (NO) which is a messenger molecule with diverse functions throughout the body. Truncated isoforms (isoform 3-isoform 6) are able to form intracellular complexes with the full-length protein and serve as dominant negative inhibitors of the enzyme activity. This is Nitric oxide synthase (Nos) from Drosophila melanogaster (Fruit fly).